We begin with the raw amino-acid sequence, 422 residues long: Elongation factor 1-alpha (422 aa).

The region spanning 5 to 221 is the tr-type G domain; it reads KPHMNLAVIG…NNLKVPEKPS (217 aa). The interval 14-21 is G1; the sequence is GHIDHGKS. 14–21 provides a ligand contact to GTP; it reads GHIDHGKS. Serine 21 contacts Mg(2+). Residues 70 to 74 are G2; that stretch reads GITID. Residues 91-94 form a G3 region; that stretch reads DCPG. GTP is bound by residues 91-95 and 146-149; these read DCPGH and NKMD. The tract at residues 146 to 149 is G4; the sequence is NKMD. The segment at 185–187 is G5; it reads SAF.

Belongs to the TRAFAC class translation factor GTPase superfamily. Classic translation factor GTPase family. EF-Tu/EF-1A subfamily.

The protein localises to the cytoplasm. It catalyses the reaction GTP + H2O = GDP + phosphate + H(+). Functionally, GTP hydrolase that promotes the GTP-dependent binding of aminoacyl-tRNA to the A-site of ribosomes during protein biosynthesis. In Methanosarcina barkeri (strain Fusaro / DSM 804), this protein is Elongation factor 1-alpha.